We begin with the raw amino-acid sequence, 419 residues long: Synaptosomal-associated protein 47 (419 aa).

T-SNARE coiled-coil homology domains follow at residues 108–170 (PQGA…LSEL) and 356–418 (VLQP…MRKL).

Belongs to the SVAP1 family.

Its function is as follows. May play a role in intracellular membrane fusion. The chain is Synaptosomal-associated protein 47 (snap47) from Danio rerio (Zebrafish).